The sequence spans 392 residues: Chaperone protein DnaJ 1 (392 aa).

Positions 4-67 (DYYEILGVSH…QKRAVFDRGG (64 aa)) constitute a J domain. The CR-type zinc-finger motif lies at 134-216 (GVTKSLEVDT…CSGEGRVRTT (83 aa)). Zn(2+) is bound by residues Cys147, Cys150, Cys164, Cys167, Cys190, Cys193, Cys204, and Cys207. CXXCXGXG motif repeat units follow at residues 147–154 (CPKCQGKG), 164–171 (CDTCQGRG), 190–197 (CPTCHGYG), and 204–211 (CQECSGEG). A disordered region spans residues 367-392 (ETNASASVEKSGGRGMFSRIKEAFGG).

Belongs to the DnaJ family. As to quaternary structure, homodimer. Zn(2+) is required as a cofactor.

It is found in the cytoplasm. Participates actively in the response to hyperosmotic and heat shock by preventing the aggregation of stress-denatured proteins and by disaggregating proteins, also in an autonomous, DnaK-independent fashion. Unfolded proteins bind initially to DnaJ; upon interaction with the DnaJ-bound protein, DnaK hydrolyzes its bound ATP, resulting in the formation of a stable complex. GrpE releases ADP from DnaK; ATP binding to DnaK triggers the release of the substrate protein, thus completing the reaction cycle. Several rounds of ATP-dependent interactions between DnaJ, DnaK and GrpE are required for fully efficient folding. Also involved, together with DnaK and GrpE, in the DNA replication of plasmids through activation of initiation proteins. This is Chaperone protein DnaJ 1 from Cutibacterium acnes (strain DSM 16379 / KPA171202) (Propionibacterium acnes).